A 522-amino-acid chain; its full sequence is Cytochrome P450 monooxygenase AKT7 (522 aa).

Residues 10–30 form a helical membrane-spanning segment; sequence LYVTCTVLAALILGYIQAMII. Cys-452 contacts heme.

Belongs to the cytochrome P450 family. It depends on heme as a cofactor.

It is found in the membrane. It participates in mycotoxin biosynthesis. Its function is as follows. Cytochrome P450 monooxygenase; part of the gene clusters that mediate the biosynthesis of the host-selective toxins (HSTs) AK-toxins responsible for Japanese pear black spot disease by the Japanese pear pathotype. AK-toxins are esters of 9,10-epoxy 8-hydroxy 9-methyldecatrienoic acid (EDA). On cellular level, AK-toxins affect plasma membrane of susceptible cells and cause a sudden increase in loss of K(+) after a few minutes of toxin treatment. The acyl-CoA ligase AKT1, the hydrolase AKT2 and enoyl-CoA hydratase AKT3 are all involved in the biosynthesis of the AK-, AF- and ACT-toxin common 9,10-epoxy-8-hydroxy-9-methyl-decatrienoic acid (EDA) structural moiety. Part of the EDA biosynthesis occurs in the peroxisome since these 3 enzymes are localized in peroxisomes. The exact roles of the 3 enzymes, as well as of additional AK-toxin clusters enzymes, including AKT4, AKT6 and AKTS1, have still to be elucidated. The Cytochrome P450 monooxygenase AKT7 on the other side functions to limit production of EDA and AK-toxin, probably via the catalysis of a side reaction of EDA or its precursor. This chain is Cytochrome P450 monooxygenase AKT7, found in Alternaria alternata (Alternaria rot fungus).